A 286-amino-acid chain; its full sequence is Protoheme IX farnesyltransferase (286 aa).

8 consecutive transmembrane segments (helical) span residues 14 to 31 (FRLT…YILA), 38 to 58 (WLNL…ANII), 94 to 114 (LFLI…ALIL), 135 to 155 (IAVF…WIAV), 165 to 185 (VLFA…AWVL), 207 to 227 (TATI…LPYL), 228 to 248 (FGMS…LFFF), and 262 to 282 (ALLL…AFVL).

This sequence belongs to the UbiA prenyltransferase family. Protoheme IX farnesyltransferase subfamily.

It localises to the cell inner membrane. The enzyme catalyses heme b + (2E,6E)-farnesyl diphosphate + H2O = Fe(II)-heme o + diphosphate. It functions in the pathway porphyrin-containing compound metabolism; heme O biosynthesis; heme O from protoheme: step 1/1. In terms of biological role, converts heme B (protoheme IX) to heme O by substitution of the vinyl group on carbon 2 of heme B porphyrin ring with a hydroxyethyl farnesyl side group. The protein is Protoheme IX farnesyltransferase of Cytophaga hutchinsonii (strain ATCC 33406 / DSM 1761 / CIP 103989 / NBRC 15051 / NCIMB 9469 / D465).